An 88-amino-acid polypeptide reads, in one-letter code: MAHKKGASSSRNGRDSNAQRLGVKRFGGQYVKAGEIIVRQRGTHFHPGDLVGRGKDDTLFALSPGHVRFGHRRGRRVVNVVAEAAVPA.

The interval 1–21 is disordered; that stretch reads MAHKKGASSSRNGRDSNAQRL. Residues 7–19 show a composition bias toward polar residues; the sequence is ASSSRNGRDSNAQ.

This sequence belongs to the bacterial ribosomal protein bL27 family.

The protein is Large ribosomal subunit protein bL27 of Frankia casuarinae (strain DSM 45818 / CECT 9043 / HFP020203 / CcI3).